The following is a 710-amino-acid chain: DNA ligase (710 aa).

Residues 1-26 (MPEDAIGQQVPPEQEAAGAEPTSAAR) are disordered. NAD(+) is bound by residues 53 to 57 (DAEFD), 102 to 103 (SL), and Glu-132. Lys-134 (N6-AMP-lysine intermediate) is an active-site residue. NAD(+) contacts are provided by Arg-155, Glu-196, Lys-312, and Lys-336. The Zn(2+) site is built by Cys-430, Cys-433, Cys-449, and Cys-455. A BRCT domain is found at 619–708 (EGPRPLEGMT…PDAAREVARV (90 aa)).

The protein belongs to the NAD-dependent DNA ligase family. LigA subfamily. It depends on Mg(2+) as a cofactor. The cofactor is Mn(2+).

It catalyses the reaction NAD(+) + (deoxyribonucleotide)n-3'-hydroxyl + 5'-phospho-(deoxyribonucleotide)m = (deoxyribonucleotide)n+m + AMP + beta-nicotinamide D-nucleotide.. In terms of biological role, DNA ligase that catalyzes the formation of phosphodiester linkages between 5'-phosphoryl and 3'-hydroxyl groups in double-stranded DNA using NAD as a coenzyme and as the energy source for the reaction. It is essential for DNA replication and repair of damaged DNA. The chain is DNA ligase from Salinispora arenicola (strain CNS-205).